The primary structure comprises 485 residues: NADH-quinone oxidoreductase subunit N (485 aa).

Helical transmembrane passes span 8–28, 35–55, 75–95, 105–125, 127–147, 159–179, 203–223, 235–255, 271–291, 297–317, 326–346, 374–394, 408–427, and 455–475; these read LIAL…MLSI, FLNA…LWFV, LYTG…YPWL, FYLL…ANHL, SLFL…GYAF, YTIL…LVYA, LLAG…LVPF, PAPV…GVVM, VVLG…ALTQ, LLGY…IALK, VGVY…VVSL, AVMT…GFIG, WWLT…YYLR, and VVVL…QPLI.

This sequence belongs to the complex I subunit 2 family. As to quaternary structure, NDH-1 is composed of 13 different subunits. Subunits NuoA, H, J, K, L, M, N constitute the membrane sector of the complex.

It is found in the cell inner membrane. It carries out the reaction a quinone + NADH + 5 H(+)(in) = a quinol + NAD(+) + 4 H(+)(out). Functionally, NDH-1 shuttles electrons from NADH, via FMN and iron-sulfur (Fe-S) centers, to quinones in the respiratory chain. The immediate electron acceptor for the enzyme in this species is believed to be ubiquinone. Couples the redox reaction to proton translocation (for every two electrons transferred, four hydrogen ions are translocated across the cytoplasmic membrane), and thus conserves the redox energy in a proton gradient. This Cronobacter sakazakii (strain ATCC BAA-894) (Enterobacter sakazakii) protein is NADH-quinone oxidoreductase subunit N.